A 562-amino-acid chain; its full sequence is Dihydroxy-acid dehydratase (562 aa).

Position 78 (aspartate 78) interacts with Mg(2+). A [2Fe-2S] cluster-binding site is contributed by cysteine 119. Mg(2+)-binding residues include aspartate 120 and lysine 121. The residue at position 121 (lysine 121) is an N6-carboxylysine. Position 192 (cysteine 192) interacts with [2Fe-2S] cluster. Glutamate 449 serves as a coordination point for Mg(2+). The active-site Proton acceptor is the serine 475.

Belongs to the IlvD/Edd family. Homodimer. [2Fe-2S] cluster serves as cofactor. The cofactor is Mg(2+).

The catalysed reaction is (2R)-2,3-dihydroxy-3-methylbutanoate = 3-methyl-2-oxobutanoate + H2O. The enzyme catalyses (2R,3R)-2,3-dihydroxy-3-methylpentanoate = (S)-3-methyl-2-oxopentanoate + H2O. It functions in the pathway amino-acid biosynthesis; L-isoleucine biosynthesis; L-isoleucine from 2-oxobutanoate: step 3/4. The protein operates within amino-acid biosynthesis; L-valine biosynthesis; L-valine from pyruvate: step 3/4. Functionally, functions in the biosynthesis of branched-chain amino acids. Catalyzes the dehydration of (2R,3R)-2,3-dihydroxy-3-methylpentanoate (2,3-dihydroxy-3-methylvalerate) into 2-oxo-3-methylpentanoate (2-oxo-3-methylvalerate) and of (2R)-2,3-dihydroxy-3-methylbutanoate (2,3-dihydroxyisovalerate) into 2-oxo-3-methylbutanoate (2-oxoisovalerate), the penultimate precursor to L-isoleucine and L-valine, respectively. This Aliarcobacter butzleri (strain RM4018) (Arcobacter butzleri) protein is Dihydroxy-acid dehydratase.